A 266-amino-acid chain; its full sequence is Decarboxylase tropJ (266 aa).

Glutamate 80 acts as the Proton acceptor in catalysis. Residues glutamate 80, histidine 99, histidine 101, and histidine 180 each coordinate Zn(2+).

Belongs to the aldolase class II family. The cofactor is Zn(2+).

It functions in the pathway secondary metabolite biosynthesis. Functionally, decarboxylase; part of the gene cluster that mediates the biosynthesis of the tropolone class of fungal maleic anhydrides. The pathway begins with the synthesis of 3-methylorcinaldehyde by the non-reducing polyketide synthase (PKS) tropA. 3-methylorcinaldehyde is the substrate for the FAD-dependent monooxygenase tropB to yield a dearomatized hydroxycyclohexadione. The 2-oxoglutarate-dependent dioxygenase tropC then performs the oxidative ring expansion to provide the first tropolone metabolite stipitaldehyde. Trop D converts stipitaldehyde into stipitacetal which is in turn converted to stipitalide by the short-chain dehydrogenase/reductase tropE. The next steps involve tropF, tropG, tropH, tropI and tropJ to form successive tropolone maleic anhydrides including stipitaldehydic, stipitatonic and stipitatic acids. In Talaromyces stipitatus (strain ATCC 10500 / CBS 375.48 / QM 6759 / NRRL 1006) (Penicillium stipitatum), this protein is Decarboxylase tropJ.